A 259-amino-acid polypeptide reads, in one-letter code: MIDPVAIQIGPFAIHWYALCIMTGLVLAVYLSSKEAPRKKMTSDDVIDFIIIAFPIAIIGARLYYVIFEWSYYSKHLNELLAIWNGGIAIYGGLITGAIVLFIYCYYKVLNPIRFLDIIAPGVMLAQAIGRWGNFINQEAYGRVVKALPYLPSFIQKQMFIDGHYRMPTFLFESVWNIIGFTIICYLRRQKKLLLEGEVLAFYLIWYGIGRFVIEGMRTDSLIFIGLRVSQIVSIVLIILGIVFVILRRRQKGIPYYQE.

Helical transmembrane passes span 9-29 (IGPFAIHWYALCIMTGLVLAV), 47-67 (IDFIIIAFPIAIIGARLYYVI), 83-103 (IWNGGIAIYGGLITGAIVLFI), and 109-129 (VLNPIRFLDIIAPGVMLAQAI). Arg-131 serves as a coordination point for a 1,2-diacyl-sn-glycero-3-phospho-(1'-sn-glycerol). Helical transmembrane passes span 167-187 (MPTFLFESVWNIIGFTIICYL), 194-214 (LLEGEVLAFYLIWYGIGRFVI), and 227-247 (LRVSQIVSIVLIILGIVFVIL).

It belongs to the Lgt family.

The protein localises to the cell membrane. The enzyme catalyses L-cysteinyl-[prolipoprotein] + a 1,2-diacyl-sn-glycero-3-phospho-(1'-sn-glycerol) = an S-1,2-diacyl-sn-glyceryl-L-cysteinyl-[prolipoprotein] + sn-glycerol 1-phosphate + H(+). The protein operates within protein modification; lipoprotein biosynthesis (diacylglyceryl transfer). Its function is as follows. Catalyzes the transfer of the diacylglyceryl group from phosphatidylglycerol to the sulfhydryl group of the N-terminal cysteine of a prolipoprotein, the first step in the formation of mature lipoproteins. The sequence is that of Phosphatidylglycerol--prolipoprotein diacylglyceryl transferase from Streptococcus uberis (strain ATCC BAA-854 / 0140J).